Here is a 195-residue protein sequence, read N- to C-terminus: NAD(P)H-quinone oxidoreductase subunit J, chloroplastic (195 aa).

The protein belongs to the complex I 30 kDa subunit family. NDH is composed of at least 16 different subunits, 5 of which are encoded in the nucleus.

The protein resides in the plastid. The protein localises to the chloroplast thylakoid membrane. It carries out the reaction a plastoquinone + NADH + (n+1) H(+)(in) = a plastoquinol + NAD(+) + n H(+)(out). It catalyses the reaction a plastoquinone + NADPH + (n+1) H(+)(in) = a plastoquinol + NADP(+) + n H(+)(out). NDH shuttles electrons from NAD(P)H:plastoquinone, via FMN and iron-sulfur (Fe-S) centers, to quinones in the photosynthetic chain and possibly in a chloroplast respiratory chain. The immediate electron acceptor for the enzyme in this species is believed to be plastoquinone. Couples the redox reaction to proton translocation, and thus conserves the redox energy in a proton gradient. This Chlorokybus atmophyticus (Soil alga) protein is NAD(P)H-quinone oxidoreductase subunit J, chloroplastic.